The sequence spans 192 residues: Probable GTP-binding protein EngB (192 aa).

Residues 22–192 form the EngB-type G domain; that stretch reads QIPEIVFAGR…LLAHLAQYIR (171 aa). Residues 30-37, 57-61, 75-78, 142-145, and 172-174 each bind GTP; these read GRSNVGKS, GKTRL, DLPG, TKDD, and YSS. S37 and T59 together coordinate Mg(2+).

It belongs to the TRAFAC class TrmE-Era-EngA-EngB-Septin-like GTPase superfamily. EngB GTPase family. Requires Mg(2+) as cofactor.

In terms of biological role, necessary for normal cell division and for the maintenance of normal septation. The sequence is that of Probable GTP-binding protein EngB from Chlorobium phaeobacteroides (strain DSM 266 / SMG 266 / 2430).